The following is a 232-amino-acid chain: Proteasome subunit alpha type-2 (232 aa).

It belongs to the peptidase T1A family. As to quaternary structure, the 26S proteasome consists of a 20S proteasome core and two 19S regulatory subunits. The 20S proteasome core is composed of 28 subunits that are arranged in four stacked rings, resulting in a barrel-shaped structure. The two end rings are each formed by seven alpha subunits, and the two central rings are each formed by seven beta subunits. The catalytic chamber with the active sites is on the inside of the barrel.

It is found in the cytoplasm. The protein resides in the nucleus. Functionally, the proteasome is a multicatalytic proteinase complex which is characterized by its ability to cleave peptides with Arg, Phe, Tyr, Leu, and Glu adjacent to the leaving group at neutral or slightly basic pH. The proteasome has an ATP-dependent proteolytic activity. The sequence is that of Proteasome subunit alpha type-2 (psmA2) from Dictyostelium discoideum (Social amoeba).